A 1232-amino-acid polypeptide reads, in one-letter code: DNA-directed RNA polymerase subunit beta (1232 aa).

The disordered stretch occupies residues 1170-1232 (SVDEDADELE…LDLDDFGDEH (63 aa)). The segment covering 1171–1180 (VDEDADELEV) has biased composition (acidic residues). The segment covering 1189-1198 (PEEKEEKEKE) has biased composition (basic and acidic residues). Positions 1199–1232 (DSDEYDDLREEDVEPDLEELSLDDLDLDDFGDEH) are enriched in acidic residues.

This sequence belongs to the RNA polymerase beta chain family. As to quaternary structure, the RNAP catalytic core consists of 2 alpha, 1 beta, 1 beta' and 1 omega subunit. When a sigma factor is associated with the core the holoenzyme is formed, which can initiate transcription.

The catalysed reaction is RNA(n) + a ribonucleoside 5'-triphosphate = RNA(n+1) + diphosphate. Functionally, DNA-dependent RNA polymerase catalyzes the transcription of DNA into RNA using the four ribonucleoside triphosphates as substrates. The protein is DNA-directed RNA polymerase subunit beta of Clostridium botulinum (strain Kyoto / Type A2).